Here is a 332-residue protein sequence, read N- to C-terminus: Ferredoxin--NADP reductase (332 aa).

FAD is bound by residues Asp33, Gln41, Tyr46, Ala86, Phe120, Asp286, and Thr327.

It belongs to the ferredoxin--NADP reductase type 2 family. As to quaternary structure, homodimer. FAD is required as a cofactor.

The catalysed reaction is 2 reduced [2Fe-2S]-[ferredoxin] + NADP(+) + H(+) = 2 oxidized [2Fe-2S]-[ferredoxin] + NADPH. The sequence is that of Ferredoxin--NADP reductase from Rickettsia bellii (strain OSU 85-389).